A 431-amino-acid polypeptide reads, in one-letter code: UPF0597 protein LCA_0156 (431 aa).

Belongs to the UPF0597 family.

This is UPF0597 protein LCA_0156 from Latilactobacillus sakei subsp. sakei (strain 23K) (Lactobacillus sakei subsp. sakei).